Here is a 263-residue protein sequence, read N- to C-terminus: uncharacterized protein (263 aa).

The disordered stretch occupies residues 198–224 (KRSSDSFVSLKPGEDEHSPLEISTCGN).

This is an uncharacterized protein from Saccharomyces cerevisiae (strain ATCC 204508 / S288c) (Baker's yeast).